The chain runs to 318 residues: Protein-methionine-sulfoxide reductase catalytic subunit MsrP (318 aa).

Residues M1–A40 constitute a signal peptide (tat-type signal). Mo-molybdopterin contacts are provided by residues N72, Y75 to E76, C130, T165, N217, R222, and S233 to K235.

The protein belongs to the MsrP family. As to quaternary structure, heterodimer of a catalytic subunit (MsrP) and a heme-binding subunit (MsrQ). The cofactor is Mo-molybdopterin. In terms of processing, predicted to be exported by the Tat system. The position of the signal peptide cleavage has not been experimentally proven.

It is found in the periplasm. It carries out the reaction L-methionyl-[protein] + a quinone + H2O = L-methionyl-(S)-S-oxide-[protein] + a quinol. The catalysed reaction is L-methionyl-[protein] + a quinone + H2O = L-methionyl-(R)-S-oxide-[protein] + a quinol. Part of the MsrPQ system that repairs oxidized periplasmic proteins containing methionine sulfoxide residues (Met-O), using respiratory chain electrons. Thus protects these proteins from oxidative-stress damage caused by reactive species of oxygen and chlorine generated by the host defense mechanisms. MsrPQ is essential for the maintenance of envelope integrity under bleach stress, rescuing a wide series of structurally unrelated periplasmic proteins from methionine oxidation. The catalytic subunit MsrP is non-stereospecific, being able to reduce both (R-) and (S-) diastereoisomers of methionine sulfoxide. The sequence is that of Protein-methionine-sulfoxide reductase catalytic subunit MsrP from Actinobacillus pleuropneumoniae serotype 5b (strain L20).